The sequence spans 322 residues: Phthalate dioxygenase reductase (322 aa).

The FAD-binding FR-type domain occupies Asp7–Asp109. FMN contacts are provided by residues Arg56–Thr57, Ala73–Lys75, Arg81–Ser84, Thr125, and Phe226. Residues Phe239–Leu322 enclose the 2Fe-2S ferredoxin-type domain. Cys273 contacts [2Fe-2S] cluster. Position 275 (Ser275) interacts with FMN. Residues Cys278, Cys281, and Cys309 each contribute to the [2Fe-2S] cluster site.

It belongs to the PDR/VanB family. Monomer. It depends on FMN as a cofactor.

In terms of biological role, component of the electron transfer chain involved in pyridine nucleotide-dependent dihydroxylation of phthalate. Utilizes FMN to mediate electron transfer from the two-electron donor, NADH, to the one-electron acceptor, (2Fe-2S). The sequence is that of Phthalate dioxygenase reductase (ophA1) from Burkholderia cepacia (Pseudomonas cepacia).